A 157-amino-acid polypeptide reads, in one-letter code: NudC domain-containing protein 2 (157 aa).

Ser2 is subject to N-acetylserine. Residues Cys14–Leu104 enclose the CS domain. The segment at Phe134–Lys157 is disordered. The residue at position 142 (Ser142) is a Phosphoserine. Tyr145 carries the phosphotyrosine modification.

Interacts with LIS1.

The protein resides in the chromosome. It is found in the centromere. The protein localises to the kinetochore. Its subcellular location is the cytoplasm. It localises to the cytoskeleton. The protein resides in the microtubule organizing center. It is found in the centrosome. The protein localises to the spindle pole. Functionally, may regulate the LIS1/dynein pathway by stabilizing LIS1 with Hsp90 chaperone. The chain is NudC domain-containing protein 2 (Nudcd2) from Rattus norvegicus (Rat).